The following is a 152-amino-acid chain: SKP1-like protein 12 (152 aa).

The tract at residues 94 to 152 is interaction with the F-box domain of F-box proteins; it reads ILAANYLNIKSLFDLTCQTVADMIKGKTPEEIRSTFNIENDFTPEEEEAVRKENQWAFE.

The protein belongs to the SKP1 family. As to quaternary structure, part of a SCF (SKP1-cullin-F-box) protein ligase complex. Interacts with ADO3/FKF1, COI1/FBL2, EBF1/FBL6, PP2B10, At3g61590 and At5g49610. As to expression, expressed in young seedlings, roots, leaves, floral stems, inflorescences, and siliques, with a slightly higher level in inflorescence than in other tissues.

It is found in the nucleus. The protein operates within protein modification; protein ubiquitination. Functionally, involved in ubiquitination and subsequent proteasomal degradation of target proteins. Together with CUL1, RBX1 and a F-box protein, it forms a SCF E3 ubiquitin ligase complex. The functional specificity of this complex depends on the type of F-box protein. In the SCF complex, it serves as an adapter that links the F-box protein to CUL1. Plays a role during early flowers reproductive development. The sequence is that of SKP1-like protein 12 (ASK12) from Arabidopsis thaliana (Mouse-ear cress).